We begin with the raw amino-acid sequence, 416 residues long: Lipid III flippase (416 aa).

Over 1-17 (MSLAKASLWTAASTLVK) the chain is Cytoplasmic. The chain crosses the membrane as a helical span at residues 18 to 38 (IGAGLLVGKLLAVSFGPAGLG). Residues 39–45 (LAANFRQ) lie on the Periplasmic side of the membrane. A helical membrane pass occupies residues 46–66 (LITVLGVLAGAGIFNGVTKYV). The Cytoplasmic portion of the chain corresponds to 67-84 (AQYHDNPQQLRRVVGTSS). A helical membrane pass occupies residues 85–105 (AMVLGFSTLMALVFVLAAAPI). The Periplasmic segment spans residues 106–121 (SQGLFGNTDYQGLVRL). A helical membrane pass occupies residues 122-142 (VALVQMGIAWGNLLLALMKGF). Topologically, residues 143–144 (RD) are cytoplasmic. The chain crosses the membrane as a helical span at residues 145–165 (AAGNALSLIVGSLIGVLAYYV). The Periplasmic portion of the chain corresponds to 166-174 (SYRLGGYEG). Residues 175-195 (ALLGLALIPALVVIPAAIMLI) traverse the membrane as a helical segment. Residues 196 to 216 (KRGVIPLSYLKPSWDNGLAGQ) lie on the Cytoplasmic side of the membrane. Residues 217 to 237 (LSKFTLMALITSVTLPVAYIM) form a helical membrane-spanning segment. Residues 238–259 (MRKLLAAQYSWDEVGIWQGVSS) lie on the Periplasmic side of the membrane. The chain crosses the membrane as a helical span at residues 260-280 (ISDAYLQFITASFSVYLLPTL). Topologically, residues 281–302 (SRLTEKRDITREVVKSLKFVLP) are cytoplasmic. A helical membrane pass occupies residues 303 to 323 (AVAAASFTVWLLRDFAIWLLL). At 324–334 (SNKFTAMRDLF) the chain is on the periplasmic side. Residues 335-355 (AWQLVGDVLKVGAYVFGYLVI) traverse the membrane as a helical segment. The Cytoplasmic segment spans residues 356–370 (AKASLRFYILAEVSQ). 2 helical membrane passes run 371-391 (FTLLMVFAHWLIPAHGALGAA) and 392-412 (QAYMATYIVYFSLCCGVFLLW). At 413-416 (RRRA) the chain is on the cytoplasmic side.

This sequence belongs to the polysaccharide transport (PST) (TC 2.A.66.2) family. Probably part of a complex composed of WzxE, WzyE and WzzE.

The protein localises to the cell inner membrane. The protein operates within bacterial outer membrane biogenesis; enterobacterial common antigen biosynthesis. Functionally, mediates the transbilayer movement of Und-PP-GlcNAc-ManNAcA-Fuc4NAc (lipid III) from the inner to the outer leaflet of the cytoplasmic membrane during the assembly of enterobacterial common antigen (ECA). Required for the assembly of the phosphoglyceride-linked form of ECA (ECA(PG)) and the water-soluble cyclic form of ECA (ECA(CYC)). Could also mediate the translocation of Und-PP-GlcNAc. The sequence is that of Lipid III flippase from Escherichia coli (strain K12).